A 317-amino-acid chain; its full sequence is tRNA(Ile)-lysidine synthase (317 aa).

Position 30–35 (30–35 (SGGSDS)) interacts with ATP.

Belongs to the tRNA(Ile)-lysidine synthase family.

The protein resides in the cytoplasm. The catalysed reaction is cytidine(34) in tRNA(Ile2) + L-lysine + ATP = lysidine(34) in tRNA(Ile2) + AMP + diphosphate + H(+). In terms of biological role, ligates lysine onto the cytidine present at position 34 of the AUA codon-specific tRNA(Ile) that contains the anticodon CAU, in an ATP-dependent manner. Cytidine is converted to lysidine, thus changing the amino acid specificity of the tRNA from methionine to isoleucine. This is tRNA(Ile)-lysidine synthase from Chlamydia felis (strain Fe/C-56) (Chlamydophila felis).